The following is a 278-amino-acid chain: Movement protein (278 aa).

The tract at residues 256-278 is disordered; sequence TLRQEGRDKGDNRRVGVGESPTN. A compositionally biased stretch (basic and acidic residues) spans 259 to 271; the sequence is QEGRDKGDNRRVG.

This sequence belongs to the tobamoviruses movement protein family.

In Vitis vinifera (Grape), this protein is Movement protein.